A 66-amino-acid chain; its full sequence is Small ribosomal subunit protein eS27 (66 aa).

Cys21, Cys24, Cys40, and Cys43 together coordinate Zn(2+). The C4-type zinc-finger motif lies at Cys21 to Cys43.

This sequence belongs to the eukaryotic ribosomal protein eS27 family. As to quaternary structure, part of the 30S ribosomal subunit. It depends on Zn(2+) as a cofactor.

The polypeptide is Small ribosomal subunit protein eS27 (Hyperthermus butylicus (strain DSM 5456 / JCM 9403 / PLM1-5)).